Here is a 68-residue protein sequence, read N- to C-terminus: uncharacterized protein (68 aa).

This is an uncharacterized protein from Dryophytes versicolor (chameleon treefrog).